The chain runs to 290 residues: Protease HtpX homolog (290 aa).

Helical transmembrane passes span 4–24 and 39–59; these read ILLFVLTNVMVVAVLGIVASL and TALLGFALVMGFGGAIISLLI. A Zn(2+)-binding site is contributed by H144. E145 is a catalytic residue. H148 contacts Zn(2+). 2 helical membrane-spanning segments follow: residues 159-179 and 199-219; these read LIQGVMNTFVVFLSRVIGYAV and VSTIVLDIVLGFAAAIVVAWF. E224 is a binding site for Zn(2+).

The protein belongs to the peptidase M48B family. Requires Zn(2+) as cofactor.

Its subcellular location is the cell inner membrane. The sequence is that of Protease HtpX homolog from Variovorax paradoxus (strain S110).